The primary structure comprises 587 residues: Kelch-like protein 3 (587 aa).

The disordered stretch occupies residues 1 to 24 (MEGESVKPSPQPTAQAEDEEKNRR). The 68-residue stretch at 50-117 (CDVMIVAEDV…IYTAEIEVTE (68 aa)) folds into the BTB domain. The BACK domain occupies 152 to 254 (CLGIRAFADV…PRDYLVQTVE (103 aa)). Position 295 is a phosphothreonine (Thr295). Kelch repeat units lie at residues 302 to 347 (VMIV…FMAG), 348 to 394 (HVYA…VLND), 396 to 441 (LYAV…VVEG), 442 to 490 (KLYA…VLSG), 491 to 537 (QLYA…AVNG), and 539 to 585 (LYVV…VIHK). Thr375 is modified (phosphothreonine). Residues Ser376 and Ser433 each carry the phosphoserine modification.

This sequence belongs to the KLHL3 family. Homodimer. Component of the BCR(KLHL3) E3 ubiquitin ligase complex, at least composed of CUL3 and KLHL3 and RBX1. Interacts with CLDN8. Post-translationally, phosphorylation at Ser-433 by PKA or PKC decreases the interaction with WNK1 and WNK4, leading to inhibit their degradation by the BCR(KLHL3) complex. Phosphorylated at Ser-433 by PKC in response to angiotensin II signaling, decreasing ability to promote degradation of WNK1 and WNK4, leading to activation of Na-Cl cotransporter SLC12A3/NCC. Phosphorylation at Ser-433 is increased by insulin. Dephosphorylated at Ser-433 by calcineurin PPP3CA, promoting degradation of WNK1 and WNK4. As to expression, present at high level in brain and kidney (at protein level). Weakly expressed in other tissues. In kidney, predominantly localizes to the distal convoluted tubule (DCT) and collecting duct, with apical localization in the DCT (at protein level).

It is found in the cytoplasm. The protein localises to the cytosol. It localises to the cytoskeleton. Its pathway is protein modification; protein ubiquitination. Functionally, substrate-specific adapter of a BCR (BTB-CUL3-RBX1) E3 ubiquitin ligase complex that acts as a regulator of ion transport in the distal nephron. The BCR(KLHL3) complex acts by mediating ubiquitination and degradation of WNK1 and WNK4, two activators of Na-Cl cotransporter SLC12A3/NCC in distal convoluted tubule cells of kidney, thereby regulating NaCl reabsorption. The BCR(KLHL3) complex also mediates ubiquitination of CLDN8, a tight-junction protein required for paracellular chloride transport in the kidney, leading to its degradation. In Mus musculus (Mouse), this protein is Kelch-like protein 3.